The primary structure comprises 53 residues: Large ribosomal subunit protein eL40 (53 aa).

Belongs to the eukaryotic ribosomal protein eL40 family.

This chain is Large ribosomal subunit protein eL40, found in Staphylothermus marinus (strain ATCC 43588 / DSM 3639 / JCM 9404 / F1).